We begin with the raw amino-acid sequence, 233 residues long: ATP-dependent dethiobiotin synthetase BioD (233 aa).

12–17 serves as a coordination point for ATP; the sequence is GVGKTI. Threonine 16 provides a ligand contact to Mg(2+). Lysine 37 is an active-site residue. Serine 41 contributes to the substrate binding site. ATP contacts are provided by residues aspartate 51, 112–115, and 202–204; these read EGAG and PKL. The Mg(2+) site is built by aspartate 51 and glutamate 112.

It belongs to the dethiobiotin synthetase family. In terms of assembly, homodimer. Mg(2+) is required as a cofactor.

The protein localises to the cytoplasm. It catalyses the reaction (7R,8S)-7,8-diammoniononanoate + CO2 + ATP = (4R,5S)-dethiobiotin + ADP + phosphate + 3 H(+). Its pathway is cofactor biosynthesis; biotin biosynthesis; biotin from 7,8-diaminononanoate: step 1/2. In terms of biological role, catalyzes a mechanistically unusual reaction, the ATP-dependent insertion of CO2 between the N7 and N8 nitrogen atoms of 7,8-diaminopelargonic acid (DAPA, also called 7,8-diammoniononanoate) to form a ureido ring. The polypeptide is ATP-dependent dethiobiotin synthetase BioD (Bacillus velezensis (strain DSM 23117 / BGSC 10A6 / LMG 26770 / FZB42) (Bacillus amyloliquefaciens subsp. plantarum)).